The sequence spans 358 residues: uncharacterized protein (358 aa).

An N-terminal signal peptide occupies residues 1–15; sequence MITGKTISLPLSVIA. A lipid anchor (N-palmitoyl cysteine) is attached at cysteine 16. The S-diacylglycerol cysteine moiety is linked to residue cysteine 16. The segment at 331 to 358 is disordered; sequence PCGTGSPGNPPPNINSVAQHRISTNTNR. The span at 347-358 shows a compositional bias: polar residues; that stretch reads VAQHRISTNTNR.

It is found in the cell membrane. This is an uncharacterized protein from Sinorhizobium fredii (strain NBRC 101917 / NGR234).